Consider the following 593-residue polypeptide: Probable 5'-nucleotidase (593 aa).

The signal sequence occupies residues 1-21 (MKRFIPHRVIHAVCIGLALVG). Residue Cys-22 is the site of N-palmitoyl cysteine attachment. Cys-22 carries the S-diacylglycerol cysteine lipid modification. A divalent metal cation is bound by residues Asp-41, His-43, Asp-91, Asn-123, and His-224. Substrate is bound by residues Phe-456 and 539–545 (YIARGKD).

It belongs to the 5'-nucleotidase family. The cofactor is a divalent metal cation.

It is found in the cell membrane. It catalyses the reaction a ribonucleoside 5'-phosphate + H2O = a ribonucleoside + phosphate. The sequence is that of Probable 5'-nucleotidase from Treponema pallidum (strain Nichols).